The chain runs to 105 residues: Nucleoid-associated protein lin2851 (105 aa).

Positions M1 to K16 are enriched in low complexity. Positions M1 to K23 are disordered.

This sequence belongs to the YbaB/EbfC family. In terms of assembly, homodimer.

It is found in the cytoplasm. The protein localises to the nucleoid. Functionally, binds to DNA and alters its conformation. May be involved in regulation of gene expression, nucleoid organization and DNA protection. The chain is Nucleoid-associated protein lin2851 from Listeria innocua serovar 6a (strain ATCC BAA-680 / CLIP 11262).